Consider the following 129-residue polypeptide: Glycine cleavage system H protein (129 aa).

Positions serine 24 to methionine 106 constitute a Lipoyl-binding domain. Position 65 is an N6-lipoyllysine (lysine 65).

It belongs to the GcvH family. As to quaternary structure, the glycine cleavage system is composed of four proteins: P, T, L and H. It depends on (R)-lipoate as a cofactor.

Its function is as follows. The glycine cleavage system catalyzes the degradation of glycine. The H protein shuttles the methylamine group of glycine from the P protein to the T protein. The polypeptide is Glycine cleavage system H protein (Shewanella baltica (strain OS185)).